The primary structure comprises 471 residues: Variant surface glycoprotein ILTAT 1.21 (471 aa).

A signal peptide spans 1–21; that stretch reads MLRALLPSTTLALILAGGGHA. N-linked (GlcNAc...) asparagine glycosylation is found at Asn64 and Asn405. The interval 406–449 is disordered; the sequence is ATADECPETRCEYDSEKNECRPKKGTETTATGPGERTTPADGKA. Over residues 412–431 the composition is skewed to basic and acidic residues; that stretch reads PETRCEYDSEKNECRPKKGT. N-linked (GlcNAc...) asparagine glycosylation is present at Asn450. The GPI-anchor amidated serine moiety is linked to residue Ser454. A propeptide spans 455-471 (removed in mature form); the sequence is DSLLIKTSPLWLAFLLF.

The protein localises to the cell membrane. Functionally, VSG forms a coat on the surface of the parasite. The trypanosome evades the immune response of the host by expressing a series of antigenically distinct VSGs from an estimated 1000 VSG genes. The sequence is that of Variant surface glycoprotein ILTAT 1.21 from Trypanosoma brucei brucei.